The following is a 285-amino-acid chain: Nudix hydrolase 15, mitochondrial (285 aa).

Residues Met1–Ser23 constitute a mitochondrion transit peptide. Met24 carries the post-translational modification N-acetylmethionine. Disordered stretches follow at residues Arg51–Glu72 and Thr129–Ala152. In terms of domain architecture, Nudix hydrolase spans Pro99–Thr255. The short motif at Lys140 to Gly161 is the Nudix box element. Mg(2+) contacts are provided by Glu155 and Glu159.

This sequence belongs to the Nudix hydrolase family. The cofactor is Mg(2+). Mn(2+) serves as cofactor. In terms of tissue distribution, expressed in roots, leaves, stems and inflorescences.

The protein localises to the mitochondrion. Functionally, coenzyme A diphosphatase which mediates the cleavage of oxidized CoA. Can use malonyl-CoA, hexanoyl-CoA, lauroyl-CoA, myristoyl-CoA and palmitoyl-CoA as substrates, but not isobutyryl-CoA or propionyl-CoA. The chain is Nudix hydrolase 15, mitochondrial (NUDT15) from Arabidopsis thaliana (Mouse-ear cress).